The primary structure comprises 261 residues: tRNA pseudouridine synthase A (261 aa).

Catalysis depends on Asp51, which acts as the Nucleophile. Tyr109 lines the substrate pocket.

Belongs to the tRNA pseudouridine synthase TruA family. Homodimer.

It catalyses the reaction uridine(38/39/40) in tRNA = pseudouridine(38/39/40) in tRNA. Formation of pseudouridine at positions 38, 39 and 40 in the anticodon stem and loop of transfer RNAs. This chain is tRNA pseudouridine synthase A, found in Shewanella piezotolerans (strain WP3 / JCM 13877).